Consider the following 427-residue polypeptide: Ribosomal protein uS12 methylthiotransferase RimO (427 aa).

The MTTase N-terminal domain occupies 1–116 (MNFYVEVLGC…IATHIGKRNV (116 aa)). The [4Fe-4S] cluster site is built by Cys-10, Cys-46, Cys-79, Cys-145, Cys-149, and Cys-152. The Radical SAM core domain maps to 131 to 360 (VDNGQYAYVK…MDIQSQISFE (230 aa)). In terms of domain architecture, TRAM spans 363-426 (EKLVGKKLKV…IYDLEGEIVE (64 aa)).

This sequence belongs to the methylthiotransferase family. RimO subfamily. The cofactor is [4Fe-4S] cluster.

Its subcellular location is the cytoplasm. The catalysed reaction is L-aspartate(89)-[ribosomal protein uS12]-hydrogen + (sulfur carrier)-SH + AH2 + 2 S-adenosyl-L-methionine = 3-methylsulfanyl-L-aspartate(89)-[ribosomal protein uS12]-hydrogen + (sulfur carrier)-H + 5'-deoxyadenosine + L-methionine + A + S-adenosyl-L-homocysteine + 2 H(+). Catalyzes the methylthiolation of an aspartic acid residue of ribosomal protein uS12. This Thermosipho melanesiensis (strain DSM 12029 / CIP 104789 / BI429) protein is Ribosomal protein uS12 methylthiotransferase RimO.